The sequence spans 64 residues: Translation machinery-associated protein 7 homolog (64 aa).

Residues 1–64 (MSGRQGGKAK…GGGIKKSGKK (64 aa)) are disordered. Positions 21–50 (DLSEEDVEFKKKQQEEAKKIKEMAAKAGQR) form a coiled coil. Over residues 28–44 (EFKKKQQEEAKKIKEMA) the composition is skewed to basic and acidic residues. Residues 53–64 (LLGGGIKKSGKK) show a composition bias toward gly residues.

This sequence belongs to the TMA7 family.

This Caenorhabditis briggsae protein is Translation machinery-associated protein 7 homolog.